Reading from the N-terminus, the 550-residue chain is Zinc finger protein 382 (550 aa).

Residues 1 to 105 (MPLQGSVSFK…RHSRPLIFIN (105 aa)) form a mediates interaction with TRIM28 region. 2 represses transcription regions span residues 5–46 (GSVS…FVSV) and 70–211 (IFPS…PEQP). The KRAB domain occupies 7–78 (VSFKDVTVDF…RIFPSYSYLE (72 aa)). A C2H2-type 1; degenerate zinc finger spans residues 212–234 (FDHNECEKSFLMKGMLFTHTRAH). C2H2-type zinc fingers lie at residues 296-318 (FHCP…QRIH), 324-346 (YVCN…EKTH), 352-374 (FICI…HKTH), 380-402 (YECP…QRTH), 408-430 (YQCN…QRTH), 436-458 (YICN…QRIH), 464-486 (YICN…HRIH), 492-514 (NGCP…QKTH), and 520-542 (YECK…QKTH). A required for transcriptional repression activity; probably mediates sequence-specific DNA-binding region spans residues 296-550 (FHCPYCGNNF…THKVETTGIQ (255 aa)).

It belongs to the krueppel C2H2-type zinc-finger protein family. Interacts with TRIM28; enhances the transcriptional repressor activity. In terms of tissue distribution, specifically expressed in heart with a weaker expression also detected in skeletal muscle.

The protein localises to the nucleus. Its function is as follows. Functions as a sequence-specific transcriptional repressor. In Homo sapiens (Human), this protein is Zinc finger protein 382 (ZNF382).